Here is a 173-residue protein sequence, read N- to C-terminus: Small ribosomal subunit protein uS13 (173 aa).

Positions 130–143 are enriched in basic residues; that stretch reads GVRHKRGQKVRGQR. Residues 130 to 155 are disordered; sequence GVRHKRGQKVRGQRTKSTGRTEGTIG.

Belongs to the universal ribosomal protein uS13 family. As to quaternary structure, part of the 30S ribosomal subunit. Forms a loose heterodimer with protein S19. Forms two bridges to the 50S subunit in the 70S ribosome.

Functionally, located at the top of the head of the 30S subunit, it contacts several helices of the 16S rRNA. In the 70S ribosome it contacts the 23S rRNA (bridge B1a) and protein L5 of the 50S subunit (bridge B1b), connecting the 2 subunits; these bridges are implicated in subunit movement. The polypeptide is Small ribosomal subunit protein uS13 (Haloquadratum walsbyi (strain DSM 16790 / HBSQ001)).